Reading from the N-terminus, the 107-residue chain is Putative double-stranded DNA mimic protein YpsIP31758_1954 (107 aa).

It belongs to the putative dsDNA mimic protein family.

Its function is as follows. May act as a double-stranded DNA (dsDNA) mimic. Probably regulates the activity of a dsDNA-binding protein. The polypeptide is Putative double-stranded DNA mimic protein YpsIP31758_1954 (Yersinia pseudotuberculosis serotype O:1b (strain IP 31758)).